The primary structure comprises 527 residues: Transcription initiation factor TFIID subunit 6b (527 aa).

A Histone-fold domain is found at 3-99; the sequence is TKESIEVIAQ…NLEPTSGSKS (97 aa). Disordered stretches follow at residues 410 to 442 and 462 to 492; these read SPPTSSVWKTNGKLTSPRQSKRKASSDNLTHQP and MRGTTTVPQQSHTDADARHHNSPSTIAPKTS. 2 stretches are compositionally biased toward polar residues: residues 416 to 427 and 462 to 473; these read VWKTNGKLTSPR and MRGTTTVPQQSH.

The protein belongs to the TAF6 family. Component of the TFIID complex. TFIID is composed of TATA binding protein (TBP) and a number of TBP-associated factors (TAFs) whose MWs range from 14-217 kDa. Interacts with TAF5 and TAF9. In terms of tissue distribution, expressed in roots, leaves, inflorescences and siliques.

It is found in the nucleus. TAFs are components of the transcription factor IID (TFIID) complex that is essential for mediating regulation of RNA polymerase transcription. Not redundant with TAF6. In Arabidopsis thaliana (Mouse-ear cress), this protein is Transcription initiation factor TFIID subunit 6b (TAF6B).